Reading from the N-terminus, the 198-residue chain is DnaJ homolog subfamily C member 12 (198 aa).

At methionine 1 the chain carries N-acetylmethionine. The 66-residue stretch at 14–79 folds into the J domain; the sequence is DYYALLGCDE…ESRARYDHWR (66 aa). The interval 114–177 is disordered; sequence EGSGQTFTSS…GLSDLNCGHL (64 aa). The segment covering 116–125 has biased composition (polar residues); that stretch reads SGQTFTSSVP. The span at 126–156 shows a compositional bias: basic and acidic residues; it reads NKERSEQRETKKGDPDSNPEKMKQKEPKFPE. 3 positions are modified to phosphoserine: serine 160, serine 166, and serine 182.

In terms of assembly, interacts with HSPA8. Interacts with TPH1. Interacts with TPH2. Highest levels of expression are detected in kidney, pineal gland, and raphe nuclei in the brain where it localizes to serotonerigic neurons.

It localises to the cytoplasm. Functionally, probable co-chaperone that participates in the proper folding of biopterin-dependent aromatic amino acid hydroxylases, which include phenylalanine-4-hydroxylase (PAH), tyrosine 3-monooxygenase (TH) and peripheral and neuronal tryptophan hydroxylases (TPH1 and TPH2). In Mus musculus (Mouse), this protein is DnaJ homolog subfamily C member 12 (Dnajc12).